A 482-amino-acid polypeptide reads, in one-letter code: Ribulose bisphosphate carboxylase large chain (482 aa).

The propeptide occupies 1–2 (MS). An N-acetylproline modification is found at Pro-3. N6,N6,N6-trimethyllysine is present on Lys-14. Substrate-binding residues include Asn-123 and Thr-173. The active-site Proton acceptor is Lys-175. Lys-177 contacts substrate. Mg(2+) contacts are provided by Lys-201, Asp-203, and Glu-204. An N6-carboxylysine modification is found at Lys-201. His-294 (proton acceptor) is an active-site residue. Residues Arg-295, His-327, and Ser-379 each coordinate substrate.

Belongs to the RuBisCO large chain family. Type I subfamily. As to quaternary structure, heterohexadecamer of 8 large chains and 8 small chains; disulfide-linked. The disulfide link is formed within the large subunit homodimers. Mg(2+) serves as cofactor. In terms of processing, the disulfide bond which can form in the large chain dimeric partners within the hexadecamer appears to be associated with oxidative stress and protein turnover.

The protein localises to the plastid. It localises to the chloroplast. The enzyme catalyses 2 (2R)-3-phosphoglycerate + 2 H(+) = D-ribulose 1,5-bisphosphate + CO2 + H2O. It catalyses the reaction D-ribulose 1,5-bisphosphate + O2 = 2-phosphoglycolate + (2R)-3-phosphoglycerate + 2 H(+). In terms of biological role, ruBisCO catalyzes two reactions: the carboxylation of D-ribulose 1,5-bisphosphate, the primary event in carbon dioxide fixation, as well as the oxidative fragmentation of the pentose substrate in the photorespiration process. Both reactions occur simultaneously and in competition at the same active site. The polypeptide is Ribulose bisphosphate carboxylase large chain (Phytolacca americana (American pokeweed)).